The following is a 509-amino-acid chain: Cysteine--tRNA ligase (509 aa).

Cys-19 is a Zn(2+) binding site. A 'HIGH' region motif is present at residues 21–31 (PTVYNDAHIGH). Cys-213, His-238, and Glu-242 together coordinate Zn(2+). The 'KMSKS' region signature appears at 284–288 (KMSKS). An ATP-binding site is contributed by Lys-287.

It belongs to the class-I aminoacyl-tRNA synthetase family. The cofactor is Zn(2+).

It catalyses the reaction tRNA(Cys) + L-cysteine + ATP = L-cysteinyl-tRNA(Cys) + AMP + diphosphate. The chain is Cysteine--tRNA ligase (CARS) from Acanthamoeba polyphaga (Amoeba).